The sequence spans 190 residues: Protein E6C (190 aa).

The span at 1-15 (MFGVAKPPPSPIPKP) shows a compositional bias: pro residues. 2 disordered regions span residues 1 to 110 (MFGV…EGRR) and 160 to 190 (PRTP…PPDD). Residues 36–46 (ARQRASTRHRP) are compositionally biased toward basic residues. Pro residues-rich tracts occupy residues 162-171 (TPGPVAPIPE) and 181-190 (TRTPPPPPDD).

This Equus caballus (Horse) protein is Protein E6C (13).